The chain runs to 399 residues: Elongation factor Tu 1 (399 aa).

A tr-type G domain is found at 10–209 (KPHVNIGTIG…QVDTYIPEPE (200 aa)). Residues 19–26 (GHVDHGKT) are G1. 19–26 (GHVDHGKT) lines the GTP pocket. Mg(2+) is bound at residue Thr-26. The segment at 60 to 64 (GITIA) is G2. A G3 region spans residues 81 to 84 (DCPG). Residues 81–85 (DCPGH) and 136–139 (NKAD) each bind GTP. Residues 136-139 (NKAD) are G4. Residues 174-176 (SAL) form a G5 region.

Belongs to the TRAFAC class translation factor GTPase superfamily. Classic translation factor GTPase family. EF-Tu/EF-1A subfamily. In terms of assembly, monomer.

It is found in the cytoplasm. The catalysed reaction is GTP + H2O = GDP + phosphate + H(+). In terms of biological role, GTP hydrolase that promotes the GTP-dependent binding of aminoacyl-tRNA to the A-site of ribosomes during protein biosynthesis. In Syntrophotalea carbinolica (strain DSM 2380 / NBRC 103641 / GraBd1) (Pelobacter carbinolicus), this protein is Elongation factor Tu 1.